Reading from the N-terminus, the 245-residue chain is Large ribosomal subunit protein uL4 (245 aa).

The segment covering 1-13 (MSRVATSDPSVTA) has biased composition (polar residues). 3 disordered regions span residues 1–28 (MSRVATSDPSVTARTVAVHAPNGGEGGS), 56–114 (ARQG…QRTP), and 224–245 (TSTAGTEAAAGTEGVAGAEENK). Basic and acidic residues predominate over residues 59–71 (GTHDTKTRGEVRG). A compositionally biased stretch (basic residues) spans 72–83 (GGRKPYRQKGTG).

It belongs to the universal ribosomal protein uL4 family. In terms of assembly, part of the 50S ribosomal subunit.

Functionally, one of the primary rRNA binding proteins, this protein initially binds near the 5'-end of the 23S rRNA. It is important during the early stages of 50S assembly. It makes multiple contacts with different domains of the 23S rRNA in the assembled 50S subunit and ribosome. In terms of biological role, forms part of the polypeptide exit tunnel. The chain is Large ribosomal subunit protein uL4 from Frankia casuarinae (strain DSM 45818 / CECT 9043 / HFP020203 / CcI3).